Reading from the N-terminus, the 492-residue chain is N-succinylglutamate 5-semialdehyde dehydrogenase (492 aa).

An NAD(+)-binding site is contributed by 220–225 (GSANTG). Active-site residues include glutamate 243 and cysteine 277.

The protein belongs to the aldehyde dehydrogenase family. AstD subfamily.

It carries out the reaction N-succinyl-L-glutamate 5-semialdehyde + NAD(+) + H2O = N-succinyl-L-glutamate + NADH + 2 H(+). It participates in amino-acid degradation; L-arginine degradation via AST pathway; L-glutamate and succinate from L-arginine: step 4/5. Its function is as follows. Catalyzes the NAD-dependent reduction of succinylglutamate semialdehyde into succinylglutamate. This Escherichia coli (strain ATCC 8739 / DSM 1576 / NBRC 3972 / NCIMB 8545 / WDCM 00012 / Crooks) protein is N-succinylglutamate 5-semialdehyde dehydrogenase.